A 77-amino-acid chain; its full sequence is Small ribosomal subunit protein uS17 (77 aa).

Belongs to the universal ribosomal protein uS17 family. Part of the 30S ribosomal subunit.

Its function is as follows. One of the primary rRNA binding proteins, it binds specifically to the 5'-end of 16S ribosomal RNA. The polypeptide is Small ribosomal subunit protein uS17 (Rickettsia conorii (strain ATCC VR-613 / Malish 7)).